A 200-amino-acid chain; its full sequence is MADQGTEGSQPVDLTKHPSGIVPTLQNIVSTVNLDCKLDLKAIALQARNAEYNPKRFAAVIMRIREPKTTALIFASGKMVCTGAKSEHLSKLAARKYARIVQKLGFPAKFKDFKIQNIVGSCDVKFPIRLEGLAYSHSAFSSYEPELFPGLIYRMKLPKIVLLIFVSGKIVITGAKMREETYTAFENIYPVLREFRKVQQ.

2 tandem repeats follow at residues 25-101 (LQNI…ARIV) and 115-192 (IQNI…YPVL).

Belongs to the TBP family. As to quaternary structure, belongs to the TFIID complex together with the TBP-associated factors (TAFs). Binds DNA as monomer. Interacts with TAF1 (via N-terminus). Interacts with TFIIB1. Interacts with PTF2. Interacts with HAT5/ATHB-1 and ATHB-7. Component of a nuclear protein complex containing at least TATA binding proteins (TBPs, e.g. TBP1 and TBP2) and ATX1.

It is found in the nucleus. In terms of biological role, general transcription factor (GTF) that functions at the core of the DNA-binding multiprotein factor TFIID. Binding of TFIID to the TATA box is the initial transcriptional step of the pre-initiation complex (PIC), playing a role in the activation of eukaryotic genes transcribed by RNA polymerase II. Interacts with TFIIB1 and is required for activated transcription and possibly basal transcription. May act as GTF of RNA polymerase I-dependent transcription and rRNA synthesis. Forms a ternary complex with PBRP1 and the rDNA promoter region. This is TATA-box-binding protein 2 from Arabidopsis thaliana (Mouse-ear cress).